The primary structure comprises 169 residues: Ribosome maturation factor RimM (169 aa).

A PRC barrel domain is found at 97–169 (NDEAYFTDLI…KIVVDWEYDY (73 aa)).

Belongs to the RimM family. In terms of assembly, binds ribosomal protein uS19.

It localises to the cytoplasm. Its function is as follows. An accessory protein needed during the final step in the assembly of 30S ribosomal subunit, possibly for assembly of the head region. Essential for efficient processing of 16S rRNA. May be needed both before and after RbfA during the maturation of 16S rRNA. It has affinity for free ribosomal 30S subunits but not for 70S ribosomes. The protein is Ribosome maturation factor RimM of Francisella philomiragia subsp. philomiragia (strain ATCC 25017 / CCUG 19701 / FSC 153 / O#319-036).